The following is a 441-amino-acid chain: uncharacterized protein (441 aa).

11 consecutive transmembrane segments (helical) span residues 68 to 88, 110 to 130, 131 to 151, 164 to 184, 194 to 214, 229 to 246, 260 to 280, 287 to 307, 337 to 357, 384 to 404, and 412 to 432; these read MAIA…GPFA, ALIA…PLLV, GALV…AALP, SVAI…MLLP, GASA…LWSL, AIHG…LHGA, SGLA…LLLV, AVGG…GAFL, VAAA…LGVA, VQDA…AALI, and VFVL…TIVG.

The protein belongs to the major facilitator superfamily.

It localises to the cell membrane. This is an uncharacterized protein from Mycobacterium tuberculosis (strain ATCC 25618 / H37Rv).